Consider the following 208-residue polypeptide: V-type ATP synthase subunit E (208 aa).

Belongs to the V-ATPase E subunit family.

Produces ATP from ADP in the presence of a proton gradient across the membrane. This is V-type ATP synthase subunit E from Chlamydia trachomatis serovar A (strain ATCC VR-571B / DSM 19440 / HAR-13).